The following is a 627-amino-acid chain: uncharacterized protein (627 aa).

7 disordered regions span residues 57–82, 96–121, 160–184, 198–232, 247–277, 335–358, and 449–579; these read EDAM…QGED, PEAQ…APPG, GCSH…DAAY, AQSQ…CPSG, SHDA…RGAP, RQAG…EAAY, and VFDV…PPLS. Over residues 169–183 the composition is skewed to low complexity; it reads SSSDQAADAPAGDAA. The segment covering 336-357 has biased composition (low complexity); the sequence is QAGAEPAQAPATAPAPEGTEAA. Residues 450 to 464 show a composition bias toward basic and acidic residues; it reads FDVKEQGAHADRDAA.

This is an uncharacterized protein from Treponema pallidum (strain Nichols).